We begin with the raw amino-acid sequence, 103 residues long: MIPGEILFADEPVAFNEGREAVRLTVLNTADRPVQVGSHYHFAEANPGLEFDRAAAHGRRLDIAAGTAVRFEPGIPVDVRLIPLAGARVVVGLRGATGGALDA.

It belongs to the urease beta subunit family. In terms of assembly, heterotrimer of UreA (gamma), UreB (beta) and UreC (alpha) subunits. Three heterotrimers associate to form the active enzyme.

The protein localises to the cytoplasm. The catalysed reaction is urea + 2 H2O + H(+) = hydrogencarbonate + 2 NH4(+). It participates in nitrogen metabolism; urea degradation; CO(2) and NH(3) from urea (urease route): step 1/1. This is Urease subunit beta from Streptomyces coelicolor (strain ATCC BAA-471 / A3(2) / M145).